Consider the following 342-residue polypeptide: Oxygen-dependent coproporphyrinogen-III oxidase (342 aa).

Ser-98 contacts substrate. His-102 and His-112 together coordinate a divalent metal cation. Catalysis depends on His-112, which acts as the Proton donor. A substrate-binding site is contributed by 114–116; that stretch reads NYR. A divalent metal cation-binding residues include His-146 and His-176. The tract at residues 266 to 301 is important for dimerization; that stretch reads YVEFNLVWDRGTIFGLQTNGRTESILMSLPPLARWE.

It belongs to the aerobic coproporphyrinogen-III oxidase family. In terms of assembly, homodimer. A divalent metal cation is required as a cofactor.

The protein resides in the cytoplasm. The catalysed reaction is coproporphyrinogen III + O2 + 2 H(+) = protoporphyrinogen IX + 2 CO2 + 2 H2O. The protein operates within porphyrin-containing compound metabolism; protoporphyrin-IX biosynthesis; protoporphyrinogen-IX from coproporphyrinogen-III (O2 route): step 1/1. In terms of biological role, involved in the heme and chlorophyll biosynthesis. Catalyzes the aerobic oxidative decarboxylation of propionate groups of rings A and B of coproporphyrinogen-III to yield the vinyl groups in protoporphyrinogen-IX. The chain is Oxygen-dependent coproporphyrinogen-III oxidase from Prochlorococcus marinus (strain AS9601).